Consider the following 149-residue polypeptide: UPF0178 protein Sama_3557 (149 aa).

The protein belongs to the UPF0178 family.

In Shewanella amazonensis (strain ATCC BAA-1098 / SB2B), this protein is UPF0178 protein Sama_3557.